A 692-amino-acid chain; its full sequence is Elongation factor G (692 aa).

The tr-type G domain occupies 8 to 282 (ENTRNIGIMA…AVIDYLPSPL (275 aa)). GTP is bound by residues 17–24 (AHIDAGKT), 81–85 (DTPGH), and 135–138 (NKMD).

It belongs to the TRAFAC class translation factor GTPase superfamily. Classic translation factor GTPase family. EF-G/EF-2 subfamily.

The protein resides in the cytoplasm. Functionally, catalyzes the GTP-dependent ribosomal translocation step during translation elongation. During this step, the ribosome changes from the pre-translocational (PRE) to the post-translocational (POST) state as the newly formed A-site-bound peptidyl-tRNA and P-site-bound deacylated tRNA move to the P and E sites, respectively. Catalyzes the coordinated movement of the two tRNA molecules, the mRNA and conformational changes in the ribosome. This chain is Elongation factor G, found in Bacillus cereus (strain Q1).